The following is a 360-amino-acid chain: MQLIAFLAALGVPVAFAATIPSVPLNHSMIDVKLSAAGNSMVKATITNNGDRALNLLRFNTIMDEHPTRKVMVYQNGAEVQFTGMLPRYMMSNLTPDYFVSLGPKASVEHSFDLAATHDLSRGGKITVMAQGTVPTAEEHGTTITGHTVYESNKITMEVDGNKAAAVVQAMGKVKAGSIDKRSKVVTSSCHGNQLQVLQTALANSARLSQAAAKAAQSNPRKLQEYFKATDSGTVQKVVSRFMSVARESSSNSAGGTTYYCNDSMGGCHPGVLAYTLPSQNLVVNCPIYYSDIPALNKRCHGQDQATTTLHEFTHNPAVVSPFAQDLGYGYDRVAALPASKAIQNADTYALFANAIYVGC.

A signal peptide spans 1 to 17 (MQLIAFLAALGVPVAFA). The propeptide occupies 18–182 (ATIPSVPLNH…KVKAGSIDKR (165 aa)). Residues cysteine 190 and cysteine 261 are joined by a disulfide bond. The N-linked (GlcNAc...) asparagine glycan is linked to asparagine 262. Cystine bridges form between cysteine 268–cysteine 286 and cysteine 300–cysteine 360. Histidine 311 lines the Zn(2+) pocket. Residue glutamate 312 is part of the active site. Zn(2+)-binding residues include histidine 315 and aspartate 326.

It belongs to the peptidase M35 family. Zn(2+) serves as cofactor.

The protein resides in the secreted. The enzyme catalyses Preferential cleavage of bonds with hydrophobic residues in P1'. Also 3-Asn-|-Gln-4 and 8-Gly-|-Ser-9 bonds in insulin B chain.. Probable secreted metalloprotease that shows high activities on basic nuclear substrates such as histone and protamine. May be involved in virulence. This Arthroderma otae (strain ATCC MYA-4605 / CBS 113480) (Microsporum canis) protein is Probable neutral protease 2 homolog MCYG_04257.